A 508-amino-acid polypeptide reads, in one-letter code: Serine/threonine-protein kinase VRK2 (508 aa).

A Protein kinase domain is found at 29–319 (WVLGKKIGSG…KKILNPHGIP (291 aa)). Residues 35–43 (IGSGGFGLI) and lysine 61 contribute to the ATP site. The Proton acceptor role is filled by aspartate 166. Threonine 336 bears the Phosphothreonine mark. The tract at residues 397–508 (TRRRQKYQES…MLVFLALFFL (112 aa)) is interaction with MAP3K7. The residue at position 406 (serine 406) is a Phosphoserine. Residues 487-507 (VYYYRIIIPVLLMLVFLALFF) traverse the membrane as a helical; Anchor for type IV membrane protein segment.

Belongs to the protein kinase superfamily. CK1 Ser/Thr protein kinase family. VRK subfamily. In terms of assembly, isoform 1 interacts with MAP3K7, MAP2K7, MAP2K1 and KSR1. Isoform 1 and isoform 2 interact with RAN and MAPK8IP1. (Microbial infection) Isoform 1 interacts with Epstein-Barr virus BHRF1; this interaction is involved in protecting cells from apoptosis. As to quaternary structure, (Microbial infection) Isoform 1 interacts with vaccinia protein B12. Post-translationally, autophosphorylated. In terms of tissue distribution, isoform 1 and isoform 2 are expressed in various tumor cell lines. Expression of isoform 1 inversely correlates with ERBB2 in breast carcinomas (at protein level). Widely expressed. Highly expressed in fetal liver, skeletal muscle, pancreas, heart, peripheral blood leukocytes and testis.

It localises to the cytoplasm. The protein localises to the endoplasmic reticulum membrane. Its subcellular location is the mitochondrion membrane. It is found in the nucleus envelope. The protein resides in the nucleus. It carries out the reaction L-seryl-[protein] + ATP = O-phospho-L-seryl-[protein] + ADP + H(+). The catalysed reaction is L-threonyl-[protein] + ATP = O-phospho-L-threonyl-[protein] + ADP + H(+). Its activity is regulated as follows. RAN inhibits its autophosphorylation and its ability to phosphorylate histone H3. Functionally, serine/threonine kinase that regulates several signal transduction pathways. Isoform 1 modulates the stress response to hypoxia and cytokines, such as interleukin-1 beta (IL1B) and this is dependent on its interaction with MAPK8IP1, which assembles mitogen-activated protein kinase (MAPK) complexes. Inhibition of signal transmission mediated by the assembly of MAPK8IP1-MAPK complexes reduces JNK phosphorylation and JUN-dependent transcription. Phosphorylates 'Thr-18' of p53/TP53, histone H3, and may also phosphorylate MAPK8IP1. Phosphorylates BANF1 and disrupts its ability to bind DNA and reduces its binding to LEM domain-containing proteins. Down-regulates the transactivation of transcription induced by ERBB2, HRAS, BRAF, and MEK1. Blocks the phosphorylation of ERK in response to ERBB2 and HRAS. Can also phosphorylate the following substrates that are commonly used to establish in vitro kinase activity: casein, MBP and histone H2B, but it is not sure that this is physiologically relevant. In terms of biological role, phosphorylates 'Thr-18' of p53/TP53, as well as histone H3. Reduces p53/TP53 ubiquitination by MDM2, promotes p53/TP53 acetylation by EP300 and thereby increases p53/TP53 stability and activity. This chain is Serine/threonine-protein kinase VRK2 (VRK2), found in Homo sapiens (Human).